Reading from the N-terminus, the 206-residue chain is Ribosomal RNA small subunit methyltransferase G (206 aa).

S-adenosyl-L-methionine is bound by residues Gly-73, Leu-78, Val-124–Glu-125, and Arg-139.

Belongs to the methyltransferase superfamily. RNA methyltransferase RsmG family.

The protein localises to the cytoplasm. It catalyses the reaction guanosine(527) in 16S rRNA + S-adenosyl-L-methionine = N(7)-methylguanosine(527) in 16S rRNA + S-adenosyl-L-homocysteine. Its function is as follows. Specifically methylates the N7 position of guanine in position 527 of 16S rRNA. This Yersinia pseudotuberculosis serotype O:3 (strain YPIII) protein is Ribosomal RNA small subunit methyltransferase G.